Reading from the N-terminus, the 138-residue chain is Phospholipase A2 homolog (138 aa).

The first 16 residues, M1–G16, serve as a signal peptide directing secretion. 7 cysteine pairs are disulfide-bonded: C42/C131, C44/C60, C59/C111, C65/C138, C66/C104, C73/C97, and C91/C102. An important for membrane-damaging activities in eukaryotes and bacteria; heparin-binding region spans residues K121–G133.

This sequence belongs to the phospholipase A2 family. Group II subfamily. S49 sub-subfamily. In terms of assembly, monomer. In terms of tissue distribution, expressed by the venom gland.

The protein localises to the secreted. Its function is as follows. Snake venom phospholipase A2 homolog that lacks enzymatic activity. Shows high myotoxin activities and displays edema-inducing activities. Has cytotoxic activities against HUVEC cells (LC(50)=5.0 uL) and human lung adenocarcinoma A549 cells (LC(50)=5.2 uL). The sequence is that of Phospholipase A2 homolog from Echis ocellatus (Ocellated saw-scaled viper).